We begin with the raw amino-acid sequence, 514 residues long: HERV-H LTR-associating protein 1 homolog (514 aa).

Positions 1 to 29 (MQSFLLHCPPIRLCMGLACILFLWNAVSG) are cleaved as a signal peptide. Residues asparagine 58, asparagine 97, asparagine 139, asparagine 161, asparagine 179, asparagine 200, asparagine 217, asparagine 232, and asparagine 321 are each glycosylated (N-linked (GlcNAc...) asparagine). Positions 379–420 (LHPTGILTTPSRLAQPSRASGTLMPGTQTTNPTQAPAPRVPQ) are disordered. The segment covering 384 to 398 (ILTTPSRLAQPSRAS) has biased composition (polar residues). Residues 403–415 (PGTQTTNPTQAPA) show a composition bias toward low complexity.

Its subcellular location is the secreted. This Mus musculus (Mouse) protein is HERV-H LTR-associating protein 1 homolog (Hhla1).